Here is a 375-residue protein sequence, read N- to C-terminus: Naringenin 7-O-methyltransferase (375 aa).

Substrate is bound at residue 136 to 142; sequence LNLDKVF. The segment at 168–188 is substrate binding; it reads LFQYLGQDGNEPSNTLFNQAM. The S-adenosyl-L-methionine site is built by glycine 219, aspartate 242, methionine 263, and lysine 276. The Proton acceptor role is filled by histidine 280.

The protein belongs to the class I-like SAM-binding methyltransferase superfamily. Cation-independent O-methyltransferase family. COMT subfamily.

It catalyses the reaction (2S)-naringenin + S-adenosyl-L-methionine = (2S)-sakuranetin + S-adenosyl-L-homocysteine + H(+). S-adenosyl-L-methionine-dependent methyltransferase involved in the biosynthesis of the sakuranetin, an inducible defense mechanism of O.sativa against pathogen attack. The protein is Naringenin 7-O-methyltransferase of Oryza sativa subsp. japonica (Rice).